A 328-amino-acid polypeptide reads, in one-letter code: Trans-O-hydroxybenzylidenepyruvate hydratase-aldolase (328 aa).

The protein belongs to the DapA family. As to quaternary structure, homotrimer.

It carries out the reaction (3E)-4-(2-hydroxyphenyl)-2-oxobut-3-enoate + H2O = salicylaldehyde + pyruvate. The protein operates within aromatic compound metabolism; naphthalene degradation. Its activity is regulated as follows. Inhibited bye p-chloromercuribenzoate and salicylaldehyde. Activated by salicylate. Functionally, involved in the naphthalene and naphthalenesulfonate catabolic pathway. Catalyzes the transformation of trans-O-hydroxybenzylidenepyruvate (THBPA) to salicylaldehyde and pyruvate. The reaction is reversible. Can also use 2,4-dihydroxybenzalpyruvate (2,4-DHBP) and 2,6-dihydroxybenzalpyruvate (2,6-DHBP). This is Trans-O-hydroxybenzylidenepyruvate hydratase-aldolase (nsaE) from Sphingobium xenophagum.